A 229-amino-acid polypeptide reads, in one-letter code: Enolase-phosphatase E1 (229 aa).

The protein belongs to the HAD-like hydrolase superfamily. MasA/MtnC family. As to quaternary structure, monomer. It depends on Mg(2+) as a cofactor.

The catalysed reaction is 5-methylsulfanyl-2,3-dioxopentyl phosphate + H2O = 1,2-dihydroxy-5-(methylsulfanyl)pent-1-en-3-one + phosphate. It functions in the pathway amino-acid biosynthesis; L-methionine biosynthesis via salvage pathway; L-methionine from S-methyl-5-thio-alpha-D-ribose 1-phosphate: step 3/6. Its pathway is amino-acid biosynthesis; L-methionine biosynthesis via salvage pathway; L-methionine from S-methyl-5-thio-alpha-D-ribose 1-phosphate: step 4/6. In terms of biological role, bifunctional enzyme that catalyzes the enolization of 2,3-diketo-5-methylthiopentyl-1-phosphate (DK-MTP-1-P) into the intermediate 2-hydroxy-3-keto-5-methylthiopentenyl-1-phosphate (HK-MTPenyl-1-P), which is then dephosphorylated to form the acireductone 1,2-dihydroxy-3-keto-5-methylthiopentene (DHK-MTPene). The protein is Enolase-phosphatase E1 of Erwinia tasmaniensis (strain DSM 17950 / CFBP 7177 / CIP 109463 / NCPPB 4357 / Et1/99).